A 371-amino-acid chain; its full sequence is Glutamate 5-kinase (371 aa).

Residue Lys11 coordinates ATP. Substrate is bound by residues Ser52, Asp139, and Asn151. ATP-binding positions include Thr171–Asp172 and Thr213–Lys219. One can recognise a PUA domain in the interval Glu278 to Glu356.

Belongs to the glutamate 5-kinase family.

The protein resides in the cytoplasm. The enzyme catalyses L-glutamate + ATP = L-glutamyl 5-phosphate + ADP. The protein operates within amino-acid biosynthesis; L-proline biosynthesis; L-glutamate 5-semialdehyde from L-glutamate: step 1/2. Catalyzes the transfer of a phosphate group to glutamate to form L-glutamate 5-phosphate. This Synechococcus sp. (strain JA-3-3Ab) (Cyanobacteria bacterium Yellowstone A-Prime) protein is Glutamate 5-kinase.